The chain runs to 199 residues: 5'-deoxynucleotidase YfbR (199 aa).

Substrate contacts are provided by residues 18–19 (RW) and H33. The HD domain occupies 30 to 142 (VSEHSLQVAM…VKQADALCAY (113 aa)). The a divalent metal cation site is built by H33, H68, and D69. Residues D69, 77–80 (DLPT), and D137 each bind substrate. D137 is a binding site for a divalent metal cation.

The protein belongs to the 5DNU family. In terms of assembly, homodimer. A divalent metal cation serves as cofactor.

It localises to the cytoplasm. It carries out the reaction a 2'-deoxyribonucleoside 5'-phosphate + H2O = a 2'-deoxyribonucleoside + phosphate. In terms of biological role, catalyzes the strictly specific dephosphorylation of 2'-deoxyribonucleoside 5'-monophosphates. This Escherichia coli (strain K12 / MC4100 / BW2952) protein is 5'-deoxynucleotidase YfbR.